Here is a 384-residue protein sequence, read N- to C-terminus: Glucose-1-phosphate adenylyltransferase (384 aa).

Residues Y103, G168, 183–184 (EK), and S194 each bind alpha-D-glucose 1-phosphate.

This sequence belongs to the bacterial/plant glucose-1-phosphate adenylyltransferase family. As to quaternary structure, homotetramer.

It carries out the reaction alpha-D-glucose 1-phosphate + ATP + H(+) = ADP-alpha-D-glucose + diphosphate. The protein operates within glycan biosynthesis; glycogen biosynthesis. Involved in the biosynthesis of ADP-glucose, a building block required for the elongation reactions to produce glycogen. Catalyzes the reaction between ATP and alpha-D-glucose 1-phosphate (G1P) to produce pyrophosphate and ADP-Glc. The polypeptide is Glucose-1-phosphate adenylyltransferase (Fusobacterium nucleatum subsp. nucleatum (strain ATCC 25586 / DSM 15643 / BCRC 10681 / CIP 101130 / JCM 8532 / KCTC 2640 / LMG 13131 / VPI 4355)).